The primary structure comprises 318 residues: Homoserine kinase (318 aa).

97 to 107 (PIGSGLGSSAC) contacts ATP.

It belongs to the GHMP kinase family. Homoserine kinase subfamily.

It is found in the cytoplasm. It catalyses the reaction L-homoserine + ATP = O-phospho-L-homoserine + ADP + H(+). It functions in the pathway amino-acid biosynthesis; L-threonine biosynthesis; L-threonine from L-aspartate: step 4/5. In terms of biological role, catalyzes the ATP-dependent phosphorylation of L-homoserine to L-homoserine phosphate. The protein is Homoserine kinase of Photobacterium profundum (strain SS9).